We begin with the raw amino-acid sequence, 453 residues long: Nuclear distribution protein nudF-2 (453 aa).

Residues 9–41 (QADELHRALIAYLTAANLPNTAAALREELNLSE) enclose the LisH domain. Residues 62 to 88 (SVVRLQKKIMDLESRNHILQSELDNAT) adopt a coiled-coil conformation. A disordered region spans residues 84-107 (LDNATPTSRQNKDPVAWLPRAPPR). 7 WD repeats span residues 112–153 (SHRD…RTIK), 155–195 (HTKA…KNIR), 199–239 (GHDH…CVKT), 242–281 (GHAE…PEPK), 286–345 (GHEH…IKTL), 347–386 (GHDN…KCVK), and 391–449 (AHGH…LNVR).

The protein belongs to the WD repeat LIS1/nudF family. Self-associates. Interacts with ro-11/nde1 and dynein.

It localises to the cytoplasm. Its subcellular location is the cytoskeleton. It is found in the spindle pole. Positively regulates the activity of the minus-end directed microtubule motor protein dynein. May enhance dynein-mediated microtubule sliding by targeting dynein to the microtubule plus end. Required for nuclear migration during vegetative growth as well as development. Required for retrograde early endosome (EE) transport from the hyphal tip. Required for localization of dynein to the mitotic spindle poles. Recruits additional proteins to the dynein complex at SPBs. The sequence is that of Nuclear distribution protein nudF-2 (nmp-1) from Neurospora crassa (strain ATCC 24698 / 74-OR23-1A / CBS 708.71 / DSM 1257 / FGSC 987).